A 164-amino-acid chain; its full sequence is Lipoprotein signal peptidase (164 aa).

4 consecutive transmembrane segments (helical) span residues M2 to L22, V40 to F60, W70 to A90, and L99 to G119. Residues D123 and D142 contribute to the active site. The chain crosses the membrane as a helical span at residues F138–I158.

Belongs to the peptidase A8 family.

The protein localises to the cell inner membrane. It carries out the reaction Release of signal peptides from bacterial membrane prolipoproteins. Hydrolyzes -Xaa-Yaa-Zaa-|-(S,diacylglyceryl)Cys-, in which Xaa is hydrophobic (preferably Leu), and Yaa (Ala or Ser) and Zaa (Gly or Ala) have small, neutral side chains.. The protein operates within protein modification; lipoprotein biosynthesis (signal peptide cleavage). In terms of biological role, this protein specifically catalyzes the removal of signal peptides from prolipoproteins. This is Lipoprotein signal peptidase from Tolumonas auensis (strain DSM 9187 / NBRC 110442 / TA 4).